The chain runs to 885 residues: MSLISTVDDHTQDTASVASGSSATKKKYNPKVYHDDNQPLSKEAMYRAKLKYGVYNSPISGGVGVGVTDYKAATNKAANVANDNQTTVEAYRRLYVDQGAASAALKVGTEPVREKPDVHAEKFKQNRALNLNYTSAAAKALSVGTEKLFTASEEARHAGQKTYSIVSQVSAASTSRAMDMSKVLKGAERKAESRLKERSEPERKEYVKSYSMTAGAAADYGAAGGAAGAAGAAGAASRSIDLNSDVMARVAKRSELPPKQEGPTEKERNAAKFALGAATAVKDLDPKSMLPEDFAAREQQRQEFVRHMTSQKVLSMAREKVDREMASIDKQQAERRLYDNDSYNRAAVAIAQQNYQNKLNAQSEKAGKINIGGGLFLTPQEVDNIAHGLISPVLGEVSERAEAQRAADTEIATRIATYEKDLSNWKNLQRTKQTNDKNVLEVNSKRIALEKQEAKDAAQKKYDEMIKKMDETVAEKKKQLEAAKQRLEDLQEEMNMKLGMQDQKVEEELQKWDENREKDIEAARLEQEELVKPFQDELDEAEKQHEEFLKERDGIDTEITGLQEAIEGHKKKIEIYEGDIRAHDNMHVEEGGKLENLGQNKETLANTLNNDIIILANKTKEQAELSTKQARLKQLEVDAMVNERKSELNQTEIQLKKEKLQLLESMRNKAQARGDEKIDEEKVKGLFGMTSEEYLAKHAPKKEEPAEEKLETVAEEASAMKKEKPTAAAATTAAAAAATTPKKPASAPRAAPAAASPKSEKKRKGSVFDKFFLGPRKAHMIEETRTNQKVAEEKAKMDSVSKPHLVSTTNEHAKPHAAATEEAPKKVDAPKPATEVKSSEAAEDEENKLEHTFSGFSQGSVADDKGTTSGAHSETKKDGYFKEVF.

Disordered regions lie at residues 1 to 39 (MSLI…DNQP) and 695 to 885 (LAKH…KEVF). Residues 13–23 (DTASVASGSSA) show a composition bias toward polar residues. The span at 701-725 (KKEEPAEEKLETVAEEASAMKKEKP) shows a compositional bias: basic and acidic residues. Over residues 726 to 757 (TAAAATTAAAAAATTPKKPASAPRAAPAAASP) the composition is skewed to low complexity. 2 stretches are compositionally biased toward basic and acidic residues: residues 779 to 801 (HMIE…DSVS) and 873 to 885 (SETK…KEVF).

It belongs to the EIS1 family.

The protein resides in the cytoplasmic granule. It localises to the cell membrane. Functionally, required for normal formation of eisosomes, large cytoplasmic protein assemblies that localize to specialized domains on plasma membrane and mark the site of endocytosis. This chain is Eisosome protein 1 (EIS1), found in Candida glabrata (strain ATCC 2001 / BCRC 20586 / JCM 3761 / NBRC 0622 / NRRL Y-65 / CBS 138) (Yeast).